Reading from the N-terminus, the 234-residue chain is MKIYLIWGATCTGKTEHSIKLSKSTGWPVIVLDRVQCCFDIATGSGRPHPEELQSTRRIYLDNRRISEGVISAEEANDRLKLEVNKHIDSGGVILEGGSISLLKLISKDPYWCDRFIWSQHRMRLQDTDVFMDKAKARVRRMLVGSTETTGLLDELVAAQSDLNAKLAIQDIDGYRYIMNYAQARRLSITQLLNVMTGDMKEELINGIALEYYEHAKWQERDFPAEWLAERSTR.

It belongs to the isopentenyl transferase family.

It carries out the reaction dimethylallyl diphosphate + AMP = N(6)-(dimethylallyl)adenosine 5'-phosphate + diphosphate. Its function is as follows. Transfers dimethylallyl groups to AMP as part of the biosynthesis of cytokinin phytohormones. The protein is Adenylate dimethylallyltransferase (ptz) of Pseudomonas savastanoi (Pseudomonas syringae pv. savastanoi).